The sequence spans 103 residues: Histone H4 (103 aa).

Residues Met1–Gly14 are compositionally biased toward gly residues. The interval Met1–Arg20 is disordered. 6 positions are modified to N6-(2-hydroxyisobutyryl)lysine; alternate: Lys6, Lys9, Lys13, Lys17, Lys32, and Lys45. Position 6 is an N6-acetyl-N6-methyllysine; alternate (Lys6). Lys6, Lys9, Lys13, Lys17, Lys32, and Lys45 each carry N6-butyryllysine; alternate. At Lys6 the chain carries N6-glutaryllysine; alternate. Lys9 bears the N6-propionyllysine; alternate mark. Lys13 is subject to N6-acetyl-N6-methyllysine; alternate. Lys13 is modified (N6-glutaryllysine; alternate). 3 positions are modified to N6-propionyllysine; alternate: Lys17, Lys32, and Lys45. The DNA-binding element occupies Lys17 to Lys21. N6-glutaryllysine; alternate is present on Lys32. Lys32 carries the N6-succinyllysine; alternate modification. An N6-glutaryllysine; alternate mark is found at Lys60, Lys78, Lys80, and Lys92. An N6-(2-hydroxyisobutyryl)lysine modification is found at Lys60. N6-(2-hydroxyisobutyryl)lysine; alternate is present on residues Lys78, Lys80, and Lys92. An N6-butyryllysine; alternate mark is found at Lys78, Lys80, and Lys92. 3 positions are modified to N6-propionyllysine; alternate: Lys78, Lys80, and Lys92. Residue Lys78 is modified to N6-succinyllysine. Lys92 carries the post-translational modification N6-succinyllysine; alternate.

This sequence belongs to the histone H4 family. In terms of assembly, the nucleosome is a histone octamer containing two molecules each of H2A, H2B, H3 and H4 assembled in one H3-H4 heterotetramer and two H2A-H2B heterodimers. The octamer wraps approximately 147 bp of DNA. Butyrylation of histones marks active promoters and competes with histone acetylation. Post-translationally, glutarylation at Lys-92 (H4K91glu) destabilizes nucleosomes by promoting dissociation of the H2A-H2B dimers from nucleosomes.

It localises to the nucleus. It is found in the chromosome. Its function is as follows. Core component of nucleosome. Nucleosomes wrap and compact DNA into chromatin, limiting DNA accessibility to the cellular machineries which require DNA as a template. Histones thereby play a central role in transcription regulation, DNA repair, DNA replication and chromosomal stability. DNA accessibility is regulated via a complex set of post-translational modifications of histones, also called histone code, and nucleosome remodeling. The protein is Histone H4 (H4.1) of Oikopleura dioica (Tunicate).